A 128-amino-acid polypeptide reads, in one-letter code: Fluoride-specific ion channel FluC (128 aa).

Helical transmembrane passes span 2-22 (FYSI…RWCL), 35-55 (LGTL…AVVF), 67-87 (LFVI…SVEV), and 96-116 (FGWA…LTAL). Positions 75 and 78 each coordinate Na(+).

This sequence belongs to the fluoride channel Fluc/FEX (TC 1.A.43) family.

The protein localises to the cell inner membrane. It catalyses the reaction fluoride(in) = fluoride(out). With respect to regulation, na(+) is not transported, but it plays an essential structural role and its presence is essential for fluoride channel function. Functionally, fluoride-specific ion channel. Important for reducing fluoride concentration in the cell, thus reducing its toxicity. This Burkholderia cenocepacia (strain ATCC BAA-245 / DSM 16553 / LMG 16656 / NCTC 13227 / J2315 / CF5610) (Burkholderia cepacia (strain J2315)) protein is Fluoride-specific ion channel FluC.